A 287-amino-acid chain; its full sequence is Fructose-1,6-bisphosphatase class 1 (287 aa).

4 residues coordinate Mg(2+): E67, D86, L88, and D89. Substrate-binding positions include D89–S92, Y195, and K226. Position 232 (E232) interacts with Mg(2+).

Belongs to the FBPase class 1 family. As to quaternary structure, homotetramer. Mg(2+) serves as cofactor.

It localises to the cytoplasm. It carries out the reaction beta-D-fructose 1,6-bisphosphate + H2O = beta-D-fructose 6-phosphate + phosphate. The protein operates within carbohydrate biosynthesis; gluconeogenesis. This is Fructose-1,6-bisphosphatase class 1 from Campylobacter concisus (strain 13826).